Here is a 492-residue protein sequence, read N- to C-terminus: Trypanothione reductase (492 aa).

36–52 (DVQMVHGPPFFSALGGT) contacts FAD. Cys-53 and Cys-58 form a disulfide bridge. His-461 functions as the Proton acceptor in the catalytic mechanism.

It belongs to the class-I pyridine nucleotide-disulfide oxidoreductase family. In terms of assembly, homodimer. Requires FAD as cofactor.

Its subcellular location is the cytoplasm. It catalyses the reaction trypanothione + NADP(+) = trypanothione disulfide + NADPH + H(+). Trypanothione is the parasite analog of glutathione; this enzyme is the equivalent of glutathione reductase. The sequence is that of Trypanothione reductase (TPR) from Trypanosoma cruzi.